We begin with the raw amino-acid sequence, 297 residues long: TATA-box-binding protein (297 aa).

The interval 52–116 (EEQQRQQQQA…ITPATPASES (65 aa)) is disordered. Low complexity-rich tracts occupy residues 56–78 (RQQQQAQQSTSQQGNQGSGQTPQ) and 104–114 (MTPITPATPAS). 2 repeat units span residues 123-199 (LQNI…ARVV) and 213-290 (IQNM…YPIL).

Belongs to the TBP family. In terms of assembly, belongs to the TFIID complex together with the TBP-associated factors (TAFs). Binds DNA as monomer. In terms of processing, the N-terminal domain is extensively phosphorylated.

It localises to the nucleus. Its function is as follows. General transcription factor that functions at the core of the DNA-binding multiprotein factor TFIID. Binding of TFIID to the TATA box is the initial transcriptional step of the pre-initiation complex (PIC), playing a role in the activation of eukaryotic genes transcribed by RNA polymerase II. Members of the TBP family are differentially required to regulate transcription and development during early embryogenesis. Binds to the promoters of select genes. The sequence is that of TATA-box-binding protein from Xenopus tropicalis (Western clawed frog).